The following is a 197-amino-acid chain: Translation initiation factor IF-3 (197 aa).

Belongs to the IF-3 family. In terms of assembly, monomer.

It localises to the cytoplasm. Its function is as follows. IF-3 binds to the 30S ribosomal subunit and shifts the equilibrium between 70S ribosomes and their 50S and 30S subunits in favor of the free subunits, thus enhancing the availability of 30S subunits on which protein synthesis initiation begins. In Prosthecochloris aestuarii (strain DSM 271 / SK 413), this protein is Translation initiation factor IF-3.